The following is a 265-amino-acid chain: Probable autolysin SsaALP (265 aa).

An N-terminal signal peptide occupies residues 1 to 25; the sequence is MKKLAFAITATSGAAAFLTHHDAQA. 2 LysM domains span residues 27–70 and 89–132; these read TQHT…VISV and SSHT…TLQI. The disordered stretch occupies residues 72–92; sequence GSDAQNTSNTSPQAGSASSHT. Residues 74 to 92 show a composition bias toward polar residues; it reads DAQNTSNTSPQAGSASSHT. Residues 141–265 enclose the Peptidase C51 domain; it reads TPTATTGSNG…SEVSSYAFIH (125 aa).

The enzyme catalyses Hydrolyzes the link between N-acetylmuramoyl residues and L-amino acid residues in certain cell-wall glycopeptides.. Functionally, has weak lytic activity toward S.aureus cells. This chain is Probable autolysin SsaALP, found in Staphylococcus aureus (strain NCTC 8325 / PS 47).